A 589-amino-acid polypeptide reads, in one-letter code: Peptide transporter PTR_A (589 aa).

The disordered stretch occupies residues 1 to 56 (MSETKPAANDLSNVPSASDSDKDNSLDKVHSLEKTGVHEDINKLPSSDLEQLEDDG). Over residues 19 to 42 (DSDKDNSLDKVHSLEKTGVHEDIN) the composition is skewed to basic and acidic residues. The next 4 membrane-spanning stretches (helical) occupy residues 74-95 (IPLSCWLVAIVELAERFSYYGL), 124-144 (ALSYFWQFWCYVTPIFGAWIA), 153-173 (AICIFCGIYLVGILILFITSI), and 180-200 (NTSLGGFIVAIIIIGLGTGGV). N-linked (GlcNAc...) asparagine glycosylation occurs at Asn-233. A run of 8 helical transmembrane segments spans residues 236-256 (IQNVFMFFYLMINIGSLSVIA), 266-286 (FWAGYLLPLCFFCIAPLVLLL), 345-365 (VYACKVFVFYPIYWLVYGQMI), 388-408 (INAITIIIFIPICERFVYPFI), 420-440 (IFWGFMFASSAMVYAGVLQHF), 467-487 (IAIQTPAYFLIGMSEILASIT), 502-522 (SFIMSLFLVTNAFGSAIGIAL), and 533-553 (WTYTGLAVSCFIAGCLFYIIF).

It belongs to the major facilitator superfamily. Proton-dependent oligopeptide transporter (POT/PTR) (TC 2.A.17) family.

It localises to the cell membrane. It carries out the reaction a dipeptide(out) + H(+)(out) = a dipeptide(in) + H(+)(in). The enzyme catalyses an L-amino acid tripeptide(out) + H(+)(out) = an L-amino acid tripeptide(in) + H(+)(in). Peptide transporter that exploits the inwardly directed proton motive force to facilitate the cellular uptake of di/tripeptides. This Candidozyma auris (Yeast) protein is Peptide transporter PTR_A.